The sequence spans 158 residues: Transcription factor BTF3 homolog 4 (158 aa).

One can recognise an NAC-A/B domain in the interval 33-98 (TADDKKLQSS…AEVKQITEML (66 aa)). The segment at 123-158 (QVLDSKASKPEDIEEEDDDVPELVGNFDEASKNEAN) is disordered. The span at 134–143 (DIEEEDDDVP) shows a compositional bias: acidic residues.

The protein belongs to the NAC-beta family.

The chain is Transcription factor BTF3 homolog 4 (btf3l4) from Xenopus laevis (African clawed frog).